The sequence spans 327 residues: tRNA uridine(34) hydroxylase (327 aa).

The region spanning 130–224 (LDEDTVVLDT…YGKDPEVQGE (95 aa)) is the Rhodanese domain. The active-site Cysteine persulfide intermediate is Cys-184.

It belongs to the TrhO family.

The catalysed reaction is uridine(34) in tRNA + AH2 + O2 = 5-hydroxyuridine(34) in tRNA + A + H2O. In terms of biological role, catalyzes oxygen-dependent 5-hydroxyuridine (ho5U) modification at position 34 in tRNAs. The sequence is that of tRNA uridine(34) hydroxylase from Streptococcus thermophilus (strain ATCC BAA-250 / LMG 18311).